Here is a 331-residue protein sequence, read N- to C-terminus: MDPSTLMILAIVAVAIIVLAVFFTFVPVMLWISALAAGVKISIFTLVGMRLRRVIPNRVVNPLIKAHKAGLNVGTNQLESHYLAGGNVDRVVNALIAAQRANIELTFERCAAIDLAGRDVLEAVQMSVNPKVIETPFIAGVAMDGIEVKAKARITVRANIERLVGGAGEETIVARVGEGIVSTIGSSDNHKKVLENPDMISQTVLGKGLDSGTAFEILSIDIADVDIGKNIGAILQTDQAEADKNIAQAKAEERRAMAVAQEQEMRARVEEMRAKVVEAEAEVPLAMAEALREGNIGVMDYMNIKNIDADTEMRDSFGKLTKDPSDEDRKS.

A run of 2 helical transmembrane segments spans residues 6-26 and 28-48; these read LMIL…FTFV and VMLW…TLVG. Residues 236–331 form a required for correct localization region; it reads QTDQAEADKN…KDPSDEDRKS (96 aa). 4 short sequence motifs (EA repeat) span residues 240-242, 251-253, 278-282, and 288-290; these read AEA, AEE, and EAEAE. The segment at 312–331 is disordered; the sequence is EMRDSFGKLTKDPSDEDRKS.

It belongs to the flotillin-like FloA family. In terms of assembly, homooligomerizes. Interacts with FloT. Interacts with FtsH midcell. Interacts with PhoR, colocalizes with PhoR in FloA-only membrane rafts.

The protein localises to the cell membrane. It localises to the membrane raft. Functionally, found in functional membrane microdomains (FMM) that may be equivalent to eukaryotic membrane rafts. FMMs are highly dynamic and increase in number as cells age. FloA and FloT function is partially redundant; double deletions have marked synthetic phenotypes. Flotillins are thought to be important factors in membrane fluidity, especially during periods of rapid growth in rich media. Whether specific proteins are associated with FMMs is controversial; in one study FloT rafts have been shown to include proteins involved in adaptation to stationary phase, while FloA-FloT rafts include proteins involved in differentiation including sporulation, biofilm formation and DNA uptake competence. Another (more finely resolved) study only showed association of NfeD2 with FloT rafts of all the proteins examined. Involved in spatial organization of membranes, perhaps recruiting proteins to specific membrane regions. Simultaneous overexpression of both FloA and FloT leads to defects in cell division and differentiation, in part caused by stabilization of FtsH and its subsequent increased ability to degrade proteins. Cells make more biofilm, are about half as long, have less EzrA and more frequent Z-rings. In Bacillus subtilis (strain 168), this protein is Flotillin-like protein FloA.